The chain runs to 293 residues: Ribosomal protein L11 methyltransferase (293 aa).

The S-adenosyl-L-methionine site is built by Thr145, Gly166, Asp188, and Asn230.

This sequence belongs to the methyltransferase superfamily. PrmA family.

The protein resides in the cytoplasm. The enzyme catalyses L-lysyl-[protein] + 3 S-adenosyl-L-methionine = N(6),N(6),N(6)-trimethyl-L-lysyl-[protein] + 3 S-adenosyl-L-homocysteine + 3 H(+). Its function is as follows. Methylates ribosomal protein L11. The protein is Ribosomal protein L11 methyltransferase of Shewanella woodyi (strain ATCC 51908 / MS32).